The following is a 77-amino-acid chain: NAD(P)H-quinone oxidoreductase subunit L (77 aa).

Transmembrane regions (helical) follow at residues 12 to 32 (LIAYMGVITIYLLVIPLLLFY) and 47 to 67 (LGIYGLVFLFFPGLILFSPFL).

The protein belongs to the complex I NdhL subunit family. In terms of assembly, NDH-1 can be composed of about 15 different subunits; different subcomplexes with different compositions have been identified which probably have different functions.

The protein resides in the cellular thylakoid membrane. The catalysed reaction is a plastoquinone + NADH + (n+1) H(+)(in) = a plastoquinol + NAD(+) + n H(+)(out). It carries out the reaction a plastoquinone + NADPH + (n+1) H(+)(in) = a plastoquinol + NADP(+) + n H(+)(out). Its function is as follows. NDH-1 shuttles electrons from an unknown electron donor, via FMN and iron-sulfur (Fe-S) centers, to quinones in the respiratory and/or the photosynthetic chain. The immediate electron acceptor for the enzyme in this species is believed to be plastoquinone. Couples the redox reaction to proton translocation, and thus conserves the redox energy in a proton gradient. Cyanobacterial NDH-1 also plays a role in inorganic carbon-concentration. The polypeptide is NAD(P)H-quinone oxidoreductase subunit L (Prochlorococcus marinus (strain MIT 9312)).